Reading from the N-terminus, the 106-residue chain is Serine rich endogenous peptide 7 (106 aa).

A signal peptide spans 1 to 26 (MGKKCSSKFRQMLVLVLLLIVFTCLS). Composition is skewed to basic and acidic residues over residues 46-56 (GIEDEGQERTH) and 65-77 (RSVE…EGRR). The interval 46–106 (GIEDEGQERT…GGGRIPVAAS (61 aa)) is disordered. Short sequence motifs (SCOOP motif) lie at residues 58–72 (LNSK…KTHH) and 86–100 (GIRA…GGGR). Short sequence motifs (sxS motif essential for MIK2 binding) lie at residues 64–66 (SRS) and 92–94 (SKS).

It belongs to the serine rich endogenous peptide (SCOOP) phytocytokine family. Interacts with MIK2 (via extracellular leucine-rich repeat domain); this interaction triggers the formation of complex between MIK2 and the BAK1/SERK3 and SERK4 coreceptors, and subsequent BAK1 activation by phosphorylation. Mostly expressed in roots, and, to a lower extent, in seedlings shoots.

It localises to the cell membrane. The protein localises to the secreted. The protein resides in the extracellular space. It is found in the apoplast. Brassicaceae-specific phytocytokine (plant endogenous peptide released into the apoplast) perceived by MIK2 in a BAK1/SERK3 and SERK4 coreceptors-dependent manner, that modulates various physiological and antimicrobial processes including growth prevention and reactive oxygen species (ROS) response regulation. This Arabidopsis thaliana (Mouse-ear cress) protein is Serine rich endogenous peptide 7.